The primary structure comprises 114 residues: Progonadoliberin-2 (114 aa).

The N-terminal stretch at 1 to 24 (MASSRRGLLLLLMLLTAHPGPSEA) is a signal peptide. Glycine amide is present on Gly-34. Positions 35 to 59 (GKRALSSAQDPQNALRPPAGSPAQA) are disordered.

Belongs to the GnRH family.

It is found in the secreted. Stimulates the secretion of gonadotropins; it stimulates the secretion of both luteinizing and follicle-stimulating hormones. This is Progonadoliberin-2 (GNRH2) from Macaca mulatta (Rhesus macaque).